Here is a 265-residue protein sequence, read N- to C-terminus: Putative hydro-lyase PA14_37210 (265 aa).

The protein belongs to the D-glutamate cyclase family.

This Pseudomonas aeruginosa (strain UCBPP-PA14) protein is Putative hydro-lyase PA14_37210.